The chain runs to 128 residues: NADPH-dependent 7-cyano-7-deazaguanine reductase (128 aa).

Catalysis depends on Cys-34, which acts as the Thioimide intermediate. Catalysis depends on Asp-41, which acts as the Proton donor. Residues 56–58 (IEL) and 75–76 (HE) each bind substrate.

Belongs to the GTP cyclohydrolase I family. QueF type 1 subfamily.

The protein resides in the cytoplasm. It carries out the reaction 7-aminomethyl-7-carbaguanine + 2 NADP(+) = 7-cyano-7-deazaguanine + 2 NADPH + 3 H(+). It participates in tRNA modification; tRNA-queuosine biosynthesis. Functionally, catalyzes the NADPH-dependent reduction of 7-cyano-7-deazaguanine (preQ0) to 7-aminomethyl-7-deazaguanine (preQ1). The chain is NADPH-dependent 7-cyano-7-deazaguanine reductase from Ruthia magnifica subsp. Calyptogena magnifica.